Consider the following 500-residue polypeptide: Melanopsin (500 aa).

The Extracellular portion of the chain corresponds to 1–65; it reads MSHHSSWRGH…TVDVPDHAHY (65 aa). Asn18 carries an N-linked (GlcNAc...) asparagine glycan. Residues 66 to 86 form a helical membrane-spanning segment; sequence IIGAVILIVGITGVIGNALVI. The Cytoplasmic portion of the chain corresponds to 87 to 101; the sequence is YVFCRSRTLRTAGNM. A helical membrane pass occupies residues 102-122; the sequence is FVVNLAVADFFMSLTQSPVFF. The Extracellular portion of the chain corresponds to 123–138; that stretch reads AASLHRRWIFGERICE. Residues Cys137 and Cys215 are joined by a disulfide bond. A helical membrane pass occupies residues 139–159; sequence LYAFCGALFGICSMMTLTAIA. Over 160 to 182 the chain is Cytoplasmic; the sequence is ADRCLAITQPLALVGNVSRRKAG. Residues 183–203 traverse the membrane as a helical segment; it reads AVLAVVWLYSLGWSLPPFFGW. The Extracellular portion of the chain corresponds to 204-232; that stretch reads SAYVPEGLQTSCSWDYMTFTPSVRAYTIL. The helical transmembrane segment at 233-253 threads the bilayer; it reads LFIFVFFIPLGIIVSCYVGIF. At 254–286 the chain is on the cytoplasmic side; it reads QAIRAMGKEIRELDCGETQKVYERMQNEWKMAK. Residues 287 to 307 traverse the membrane as a helical segment; that stretch reads IALLVILLFVISWSPYSVVAL. At 308-322 the chain is on the extracellular side; the sequence is TATAGYSHLLTPYMN. Residues 323–343 form a helical membrane-spanning segment; the sequence is SVPAVIAKASAIHNPIIYAIT. Lys330 is modified (N6-(retinylidene)lysine). Over 344 to 500 the chain is Cytoplasmic; that stretch reads HPKYRAAIAR…DGKALLLGGN (157 aa). 3 disordered regions span residues 406–428, 448–470, and 481–500; these read GKKR…ADGS, VILS…AHKV, and ETDS…LGGN. Polar residues-rich tracts occupy residues 411–428 and 448–462; these read SSAS…ADGS and VILS…ASGQ.

The protein belongs to the G-protein coupled receptor 1 family. Opsin subfamily. Expressed in a subset of retinal horizontal cells as well as in retinal ganglion cells.

Its subcellular location is the cell membrane. Its function is as follows. Photoreceptor implicated in non-image-forming responses to light. The polypeptide is Melanopsin (opn4) (Rutilus rutilus (Roach)).